A 67-amino-acid chain; its full sequence is UPF0434 protein Patl_1782 (67 aa).

This sequence belongs to the UPF0434 family.

In Pseudoalteromonas atlantica (strain T6c / ATCC BAA-1087), this protein is UPF0434 protein Patl_1782.